A 519-amino-acid polypeptide reads, in one-letter code: MSVPKSCTILVAGGGPAGSYAAAALAREGNDVVLLEADQHPRYHIGESMLPSLRPLLRFIDLEDKFDAHGFQKKLGAAFKLTSKREGSHGPRGYSWNVVRSESDEILFNHARESGAQAFQGIKINAIEFEPYEEEYPNGEKVANPGKPTSAKWSSKDGSSGDIAFKYLVDATGRIGIMSTKYLKNRHYNEGLKNLAIWGYYKNNIPWAQGTPRENQPFFEGMRDGAGWCWTIPLHNGTVSVGAVMRKDLFFEKKKSLGENATNTQIMAECMKLCPTIGELLAPAELVSDIKQATDYSYSATAYAGPNFRIVGDAGCFIDPFFSSGHHLAVAGALAAAVSINASIKGDCTEYEASRWHAKKVDEGYTLFLLVVMAALKQIRMQENPVLSDVDEDGFDRAFQFLRPEAVKKFTKEDVAQTIDFAVHALNNMAELDMDIPEHMINGDKEGENGVTNGNNGAAKTAGLASNMEKLTNDEEKVLNGLRILGKAAPGGTLADFEGTAIDGLMPRLEHGKLGLNKV.

Positions 1 to 21 (MSVPKSCTILVAGGGPAGSYA) are cleaved as a signal peptide. FAD contacts are provided by Gly14, Ala17, and Glu47. Positions 324 and 325 each coordinate chloride.

The protein belongs to the flavin-dependent halogenase family.

The protein operates within secondary metabolite biosynthesis. Its function is as follows. Flavin-dependent halogenase; part of the gene cluster that mediates the biosynthesis of radicicol, a resorcylic acid lactone (RAL) that irreversibly inhibits the HSP90 molecular chaperone, an important target for cancer chemotherapy. Within the cluster, rdc2 is involved in the chlorination of the resorcylic acid lactone (RAL) structure to convert monocillin I into radicicol. Also chlorinates monocillin II to produce 6-cholomonocillin II and monocilllin IV to produce 13-chloromonocillin IV. In contrast to most fungal halogenases, rdc2 has a broad substrate specificity and can accept a variety of macrolactones as the substrates to generate chlorinated derivatives, including dihydroresorcylide, zearalenone, curvularin, or even curcumin. Rdc2 is able to dichlorinate dihydroresorcylide and monocillin IV. Dihydroresorcylide is first chlorinated at position 11 to produce 11-chlorodihydroresorcylide which can be further chlorinated by rdc2 at possition 13. Mororeover, rdc2 can incorporate bromine into dihydroresorcylide to yield the corresponding mono- and di-brominated derivatives. Finally, rdc2 is also able to halogenate the isoquinolines 4-hydroxyisoquinoline and 6-hydroxyisoquinoline into 3-chloro-4-hydroxyisoquinoline and 5-chloro-6-hydroxyisoquinoline, respectively. The radicicol cluster encodes only two apparent post-PKS enzymes, a cytochrome P450 monooxygenase (rdc4) and a non-heme halogenase (rdc2) that could introduce the epoxide and the chlorine, respectively. If this cluster includes all the genes required for radicicol biosynthesis, the remaining structural features of radicicol are presumably generated by the PKSs rdc1 and rdc5. The C-2' ketone could arise if the R-PKS rdc5 and NR-PKS rdc1 each carry out four iterations, in contrast to the five iteration-three iteration split for the hypothemycin PKSs. The origin of the cis 5',6' double bond is not known. The radicicol R-PKS rdc5 ER domain may catalyze either double bond isomerization or reduction in the third iteration. The protein is Flavin-dependent halogenase rdc2 of Metacordyceps chlamydosporia (Nematophagous fungus).